We begin with the raw amino-acid sequence, 171 residues long: Methyl-coenzyme M reductase operon protein D (171 aa).

In terms of assembly, MCR is composed of three subunits: alpha, beta, and gamma. The function of proteins C and D is not known.

The polypeptide is Methyl-coenzyme M reductase operon protein D (mcrD) (Methanosarcina barkeri (strain Fusaro / DSM 804)).